The sequence spans 109 residues: DNA-binding protein MJ0691 (109 aa).

The protein belongs to the PDCD5 family.

In Methanocaldococcus jannaschii (strain ATCC 43067 / DSM 2661 / JAL-1 / JCM 10045 / NBRC 100440) (Methanococcus jannaschii), this protein is DNA-binding protein MJ0691.